Consider the following 177-residue polypeptide: Large ribosomal subunit protein uL6 (177 aa).

This sequence belongs to the universal ribosomal protein uL6 family. In terms of assembly, part of the 50S ribosomal subunit.

This protein binds to the 23S rRNA, and is important in its secondary structure. It is located near the subunit interface in the base of the L7/L12 stalk, and near the tRNA binding site of the peptidyltransferase center. The protein is Large ribosomal subunit protein uL6 of Bradyrhizobium sp. (strain ORS 278).